The sequence spans 318 residues: Energy-coupling factor transporter ATP-binding protein EcfA2 (318 aa).

Residues 22-271 enclose the ABC transporter domain; it reads LRAQGLKCVF…PEIMQTTSIA (250 aa). ATP is bound at residue 59 to 66; the sequence is GNSGSGKS.

The protein belongs to the ABC transporter superfamily. Energy-coupling factor EcfA family. As to quaternary structure, forms a stable energy-coupling factor (ECF) transporter complex composed of 2 membrane-embedded substrate-binding proteins (S component), 2 ATP-binding proteins (A component) and 2 transmembrane proteins (T component).

Its subcellular location is the cell membrane. In terms of biological role, ATP-binding (A) component of a common energy-coupling factor (ECF) ABC-transporter complex. Unlike classic ABC transporters this ECF transporter provides the energy necessary to transport a number of different substrates. In Mycoplasmoides gallisepticum (strain R(low / passage 15 / clone 2)) (Mycoplasma gallisepticum), this protein is Energy-coupling factor transporter ATP-binding protein EcfA2.